A 376-amino-acid chain; its full sequence is N,N'-diacetylbacillosaminyl-diphospho-undecaprenol alpha-1,3-N-acetylgalactosaminyltransferase (376 aa).

Belongs to the glycosyltransferase group 1 family.

The catalysed reaction is N,N'-diacetyl-alpha-D-bacillosaminyl-tri-trans,hepta-cis-undecaprenyl diphosphate + UDP-N-acetyl-alpha-D-galactosamine = N-acetyl-alpha-D-galactosaminyl-(1-&gt;3)-N,N'-diacetyl-alpha-D-bacillosaminyl-tri-trans,hepta-cis-undecaprenyl diphosphate + UDP + H(+). Its pathway is protein modification; protein glycosylation. Functionally, adds the first GalNAc residue on to the isoprenoid-linked bacillosamine (2,4-diacetamido-2,4,6-trideoxyglucose) carrier in the N-linked protein glycosylation pathway. Acts first on the undecaprenylpyrophosphate-linked bacillosamine (Und-PP-Bac) substrate to yield the disaccharide. The polypeptide is N,N'-diacetylbacillosaminyl-diphospho-undecaprenol alpha-1,3-N-acetylgalactosaminyltransferase (pglA) (Campylobacter jejuni subsp. jejuni serotype O:2 (strain ATCC 700819 / NCTC 11168)).